The primary structure comprises 351 residues: Hepatocyte nuclear factor 3-gamma (351 aa).

Residues 52 to 73 show a composition bias toward pro residues; that stretch reads PGGLPASPLPTGPLAPPAPTAP. The interval 52 to 94 is disordered; sequence PGGLPASPLPTGPLAPPAPTAPLGPTFPGLGASTGGGSSSGYG. Residues 83 to 94 show a composition bias toward gly residues; it reads ASTGGGSSSGYG. Positions 118-212 form a DNA-binding region, fork-head; the sequence is KPPYSYISLI…ENGCYLRRQK (95 aa). The tract at residues 218–275 is disordered; that stretch reads EKVKKGGGGSSASRNSAGSASTATAPAATVASTPQPQPPPPEPEAQGGDEVGALDCGS. The span at 228-251 shows a compositional bias: low complexity; the sequence is SASRNSAGSASTATAPAATVASTP.

Its subcellular location is the nucleus. Its function is as follows. Transcription activator for a number of liver genes such as AFP, albumin, tyrosine aminotransferase, PEPCK, etc. Interacts with the cis-acting regulatory regions of these genes. In Bos taurus (Bovine), this protein is Hepatocyte nuclear factor 3-gamma (FOXA3).